The primary structure comprises 146 residues: uncharacterized protein (146 aa).

Residues 7–24 (VIALFLVTGLTLYAIRLL) form a helical membrane-spanning segment.

Its subcellular location is the membrane. This is an uncharacterized protein from Haemophilus influenzae (strain ATCC 51907 / DSM 11121 / KW20 / Rd).